We begin with the raw amino-acid sequence, 920 residues long: MPVLGLDNITGRIMRAGEGRILRRLQRIAAQVNSLEEEFKALTDEELQALTPEFTRRHADGESLDDLLPEAFATMREAARRTLGMRHFDVQLMGGAALHFGNIAEMQTGEGKTLVGTLPVYLNALTGKGVHLVTVNDYLAERDAEWMGRAYRFLGLTVGVIKSQSTPAERRAQYACDITYGTNTEFGFDYLRDNMAWSQDELVQRGHHFAIVDEADSILIDEARTPLIISGPADQPTQWYGAFAKLVTRMRGVRVQEEQFVTPADKDRLAHLRTTHDYEYDPKKRTVAILDRGVEYLQDQLGIESLYESEHTSLIGHLNNALKAKEHFRKDKDYVVVDGEVLIVDEHTGRILAGRRYNEGLHQAIEAKEAEEGTEAGVTVRNENQTLATITLQNFFRLYEKLAGMTGTAMTEAAEFHQIYQLNVVPIPSNRPMIRRDDPDQIYRTEEAKYAAILADIAERHETGQPILVGTTSVEKSELLSGLLRKQGIRHEVLNAKNHQREAQIVAQAGRRGAVTVATNMAGRGTDIMLGGNPEAMALAALPEDATPEDREAVLDRVGRAAAAEHEEVKELGGLYVLGTERHESRRIDNQLRGRSGRQGDPGASRFYLSLGDDLMRLFRAQVVERVMSMANVPDDVPIENKMVTRAIASAQSQLEQQHFESRKDVLKFDEVLNRQRTLIYAERRRVLAGEDLREQVRHFMDDTIEAYIRQETGEGFPEEWDLERLWGAFRQLYPVGITIEDLEDSVGGRPDLTVDDLVAAVTEDVHDRYARREAELGADALRDLERLVVLSVLDRKWREHLYEMDYLRDGIGLRWTLGREPIVEYEREGFDMFGAMTEAIKEESVGYVFNLDATGREGEGSALDRRPTDGLHFSAPTLDTAEGVVEGRFTTAPAGEPAEHDKAPPHRPGKSRNRRRRKR.

Residues Gln91, 109–113 (GEGKT), and Asp527 contribute to the ATP site. The segment covering 859-870 (GEGSALDRRPTD) has biased composition (basic and acidic residues). Residues 859–920 (GEGSALDRRP…KSRNRRRRKR (62 aa)) are disordered. Basic residues predominate over residues 906–920 (PHRPGKSRNRRRRKR).

It belongs to the SecA family. As to quaternary structure, monomer and homodimer. Part of the essential Sec protein translocation apparatus which comprises SecA, SecYEG and auxiliary proteins SecDF. Other proteins may also be involved.

It is found in the cell membrane. Its subcellular location is the cytoplasm. The enzyme catalyses ATP + H2O + cellular proteinSide 1 = ADP + phosphate + cellular proteinSide 2.. Functionally, part of the Sec protein translocase complex. Interacts with the SecYEG preprotein conducting channel. Has a central role in coupling the hydrolysis of ATP to the transfer of proteins into and across the cell membrane, serving as an ATP-driven molecular motor driving the stepwise translocation of polypeptide chains across the membrane. This is Protein translocase subunit SecA 2 from Streptomyces avermitilis (strain ATCC 31267 / DSM 46492 / JCM 5070 / NBRC 14893 / NCIMB 12804 / NRRL 8165 / MA-4680).